Here is a 594-residue protein sequence, read N- to C-terminus: Neuronal PAS domain-containing protein 1 (594 aa).

Residues 45–98 (QRKEKSRNAARWRRGKENLEFFELAKLLPLPGAISSQLDKASIVRLSVTYLRLR) enclose the bHLH domain. One can recognise a PAS 1 domain in the interval 135 to 205 (EQHLGGHILQ…EQLGLRAASI (71 aa)). A disordered region spans residues 206–237 (GPPTPPSVSSSSSSSSSSLVDTPEIEASPTEA). Residues 212–223 (SVSSSSSSSSSS) are compositionally biased toward low complexity. In terms of domain architecture, PAS 2 spans 294–360 (APLAELPLHG…IRQSHLDLLD (67 aa)). A PAC domain is found at 366 to 409 (TGYYRWLQRAGGFVWLQSVATVAGNGKSTGEHHVLWVSHVLSNA). The tract at residues 427 to 498 (QEEPSRPGPE…DPPAPPRPEF (72 aa)) is disordered. Over residues 453 to 480 (DQDKDKDPQARGKRIKVEASPKEARGSE) the composition is skewed to basic and acidic residues.

As to quaternary structure, efficient DNA binding requires dimerization with another bHLH protein. Interacts with ARNT; forms a heterodimer that binds core DNA sequence 5'-[AG]CGTG-3' within the hypoxia response element (HRE) leading to a transcriptional repressor on its target gene TH. In terms of tissue distribution, expressed in brain in inhibitory interneurons. Also found in spinal cord.

It localises to the nucleus. Its function is as follows. May control regulatory pathways relevant to schizophrenia and to psychotic illness. May play a role in late central nervous system development by modulating EPO expression in response to cellular oxygen level. Forms a heterodimer that binds core DNA sequence 5'-TACGTG-3' within the hypoxia response element (HRE) leading to transcriptional repression on its target gene TH. This chain is Neuronal PAS domain-containing protein 1 (Npas1), found in Mus musculus (Mouse).